A 249-amino-acid polypeptide reads, in one-letter code: Cytoplasmic envelopment protein 1 (249 aa).

It belongs to the herpesviridae cytoplasmic envelopment protein 1 family.

The protein localises to the virion. It is found in the virion tegument. It localises to the host cytoplasm. The protein resides in the host Golgi apparatus. Functionally, plays a critical role in cytoplasmic virus egress. Participates in the final step of tegumentation and envelope acquisition within the host cytoplasm. The protein is Cytoplasmic envelopment protein 1 (U75) of Human herpesvirus 6A (strain Uganda-1102) (HHV-6 variant A).